The sequence spans 1047 residues: Jouberin (1047 aa).

3 stretches are compositionally biased toward basic and acidic residues: residues 1–17 (MEPE…EKVR), 29–40 (SREKTGIEEKGE), and 77–86 (LLHDDKLASE). 2 disordered regions span residues 1–40 (MEPE…EKGE) and 67–181 (EQLT…SRDS). Residues 1–284 (MEPETPEKVD…IFNENFPYLL (284 aa)) are interaction with HAP1. Over residues 96–106 (PVPTKPESSPS) the composition is skewed to low complexity. A compositionally biased stretch (basic and acidic residues) spans 115–138 (GEQKKEGTPEDSQHMEGICSREQD). Residues 149 to 159 (PKPKKTKKKTK) are compositionally biased toward basic residues. Positions 172–181 (GVHEITSRDS) are enriched in basic and acidic residues. 7 WD repeats span residues 457–499 (AGER…FMRE), 502–541 (GHLN…TSTF), 545–585 (PHPS…DAAI), 592–631 (VHKS…NDVQ), 648–687 (FRGV…ARKF), 691–730 (ANYR…QVAM), and 735–776 (PFKS…AQQE). Ser-853 carries the post-translational modification Phosphoserine. Residues 902–962 (DPPPMVVALY…PANHVASETL (61 aa)) form the SH3 domain. Basic and acidic residues-rich tracts occupy residues 963-987 (YRDS…KPEK) and 1013-1040 (HSEK…EPVV). Positions 963–1047 (YRDSPPKVKE…PVVRKVTLIE (85 aa)) are disordered. Ser-974 carries the post-translational modification Phosphoserine.

In terms of assembly, self-associates. Part of the tectonic-like complex (also named B9 complex). Interacts with MKS1. Interacts with NPHP1; probably as heterodimers and/or AHI1(2):NPHP1(2) heterotetramers. Interacts (via SH3 domain) with the dynamin GTPase DNM2. Interacts with HAP1; probably as AHI1(2):HAP1(2) heterotetramers. Interacts with RAB8A. Interacts with CEND1. Interacts with SPATA7. In terms of tissue distribution, expressed in the retina (at protein level). Highly expressed in the brain. Highly expressed in the testis. Expressed in the kidney, thymus, heart, lung, spleen. Weakly expressed in the liver, stomach, pancreas, and embryo. Strongly expressed during periods of both cortical and cerebellar development.

The protein resides in the cytoplasm. It localises to the cytoskeleton. Its subcellular location is the cilium basal body. The protein localises to the microtubule organizing center. It is found in the centrosome. The protein resides in the centriole. It localises to the cell junction. Its subcellular location is the adherens junction. Involved in vesicle trafficking and required for ciliogenesis, formation of primary non-motile cilium, and recruitment of RAB8A to the basal body of primary cilium. Component of the tectonic-like complex, a complex localized at the transition zone of primary cilia and acting as a barrier that prevents diffusion of transmembrane proteins between the cilia and plasma membranes. Involved in neuronal differentiation. As a positive modulator of classical Wnt signaling, may play a crucial role in ciliary signaling during cerebellum embryonic development. In Mus musculus (Mouse), this protein is Jouberin (Ahi1).